Reading from the N-terminus, the 304-residue chain is uncharacterized protein (304 aa).

The signal sequence occupies residues 1–25 (MVKTAMLGAVALVIALGGTCGVADA). The region spanning 34 to 303 (PMIVAHRAGT…DSPLAAQQWR (270 aa)) is the GP-PDE domain.

This is an uncharacterized protein from Mycobacterium tuberculosis (strain CDC 1551 / Oshkosh).